The sequence spans 480 residues: Argininosuccinate lyase (480 aa).

The span at 1-17 (MTDTTPSADLGASSQQP) shows a compositional bias: polar residues. Residues 1–24 (MTDTTPSADLGASSQQPAKAWSGR) form a disordered region.

Belongs to the lyase 1 family. Argininosuccinate lyase subfamily.

Its subcellular location is the cytoplasm. It catalyses the reaction 2-(N(omega)-L-arginino)succinate = fumarate + L-arginine. It participates in amino-acid biosynthesis; L-arginine biosynthesis; L-arginine from L-ornithine and carbamoyl phosphate: step 3/3. The protein is Argininosuccinate lyase of Azoarcus sp. (strain BH72).